A 334-amino-acid polypeptide reads, in one-letter code: 3-keto-steroid reductase/17-beta-hydroxysteroid dehydrogenase 7 (334 aa).

The Extracellular segment spans residues 1-229 (MRKVVLITGA…VTCPGVVMTN (229 aa)). 8-15 (TGASSGIG) serves as a coordination point for NAD(+). Residue Asn37 is glycosylated (N-linked (GlcNAc...) asparagine). Substrate is bound at residue Ser171. Residue Asn178 is glycosylated (N-linked (GlcNAc...) asparagine). Residue Tyr193 is the Proton acceptor of the active site. A glycan (N-linked (GlcNAc...) asparagine) is linked at Asn229. A helical membrane pass occupies residues 230-250 (LTYGILPPFVWTLLLPVIWLL). Over 251–334 (RFFAHAFTVT…ITIQKSDHHS (84 aa)) the chain is Cytoplasmic.

The protein belongs to the short-chain dehydrogenases/reductases (SDR) family. ERG27 subfamily. Binds to the short form of prolactin receptor. Phosphorylated. As to expression, most abundant in ovaries of pregnant animals.

It is found in the endoplasmic reticulum membrane. It catalyses the reaction 17beta-estradiol + NADP(+) = estrone + NADPH + H(+). It carries out the reaction a 3beta-hydroxysteroid + NADP(+) = a 3-oxosteroid + NADPH + H(+). The catalysed reaction is 4alpha-methyl-5alpha-cholest-7-en-3beta-ol + NADP(+) = 4alpha-methyl-5alpha-cholest-7-en-3-one + NADPH + H(+). The enzyme catalyses 4alpha-methyl-5alpha-cholest-8-en-3-one + NADPH + H(+) = 4alpha-methyl-5alpha-cholest-8-en-3beta-ol + NADP(+). It catalyses the reaction 3-dehydro-4alpha-methylzymosterol + NADPH + H(+) = 4alpha-methylzymosterol + NADP(+). It carries out the reaction zymosterone + NADPH + H(+) = zymosterol + NADP(+). The catalysed reaction is 5alpha-cholest-8-en-3-one + NADPH + H(+) = 5alpha-cholest-8-en-3beta-ol + NADP(+). The enzyme catalyses 5alpha-androstane-3beta,17beta-diol + NADP(+) = 17beta-hydroxy-5alpha-androstan-3-one + NADPH + H(+). It catalyses the reaction 5alpha-androstane-3alpha,17beta-diol + NADP(+) = 17beta-hydroxy-5alpha-androstan-3-one + NADPH + H(+). Its pathway is steroid biosynthesis; estrogen biosynthesis. The protein operates within steroid biosynthesis; zymosterol biosynthesis; zymosterol from lanosterol: step 5/6. Its function is as follows. Bifunctional enzyme involved in steroid-hormone metabolism and cholesterol biosynthesis. Catalyzes the NADP(H)-dependent reduction of estrogens and androgens and regulates the biological potency of these steroids. Converts estrone (E1) to a more potent estrogen, 17beta-estradiol (E2). Converts dihydrotestosterone (DHT) to an inactive form. Also participates in the post-squalene cholesterol biosynthesis, as a 3-ketosteroid reductase. The sequence is that of 3-keto-steroid reductase/17-beta-hydroxysteroid dehydrogenase 7 (Hsd17b7) from Rattus norvegicus (Rat).